Here is a 98-residue protein sequence, read N- to C-terminus: UPF0251 protein VC0395_0048/VC395_A0084 (98 aa).

It belongs to the UPF0251 family.

The sequence is that of UPF0251 protein VC0395_0048/VC395_A0084 from Vibrio cholerae serotype O1 (strain ATCC 39541 / Classical Ogawa 395 / O395).